Here is a 193-residue protein sequence, read N- to C-terminus: Pyridoxal 5'-phosphate synthase subunit PdxT (193 aa).

52–54 provides a ligand contact to L-glutamine; sequence GES. The Nucleophile role is filled by Cys84. Residues Arg111 and 139 to 140 each bind L-glutamine; that span reads IR. Residues His176 and Glu178 each act as charge relay system in the active site.

The protein belongs to the glutaminase PdxT/SNO family. In terms of assembly, in the presence of PdxS, forms a dodecamer of heterodimers. Only shows activity in the heterodimer.

The catalysed reaction is aldehydo-D-ribose 5-phosphate + D-glyceraldehyde 3-phosphate + L-glutamine = pyridoxal 5'-phosphate + L-glutamate + phosphate + 3 H2O + H(+). The enzyme catalyses L-glutamine + H2O = L-glutamate + NH4(+). It participates in cofactor biosynthesis; pyridoxal 5'-phosphate biosynthesis. Functionally, catalyzes the hydrolysis of glutamine to glutamate and ammonia as part of the biosynthesis of pyridoxal 5'-phosphate. The resulting ammonia molecule is channeled to the active site of PdxS. The polypeptide is Pyridoxal 5'-phosphate synthase subunit PdxT (Pasteurella multocida (strain Pm70)).